Consider the following 133-residue polypeptide: MSMSDPIGDMLTRIRNAGRAKHDTCLVPGSKIKKSILDLMKEEGFIRDYESVKVNETFEDYKVFLKYDQTKRPIIRELIRVSTPGRRVYIKSTEIRPYKNNIGTLIVSTSKGIMTGKNARKLKLGGEVILKMS.

Belongs to the universal ribosomal protein uS8 family. Part of the 30S ribosomal subunit. Contacts proteins S5 and S12.

Its function is as follows. One of the primary rRNA binding proteins, it binds directly to 16S rRNA central domain where it helps coordinate assembly of the platform of the 30S subunit. The chain is Small ribosomal subunit protein uS8 from Leptospira borgpetersenii serovar Hardjo-bovis (strain JB197).